The chain runs to 168 residues: Phosphopantetheine adenylyltransferase (168 aa).

Substrate is bound at residue Thr14. Residues 14-15 (TF) and His22 each bind ATP. The substrate site is built by Lys46, Leu78, and Arg92. ATP is bound by residues 93–95 (GLR), Glu103, and 128–134 (YSFISSS).

It belongs to the bacterial CoaD family. As to quaternary structure, homohexamer. It depends on Mg(2+) as a cofactor.

Its subcellular location is the cytoplasm. The enzyme catalyses (R)-4'-phosphopantetheine + ATP + H(+) = 3'-dephospho-CoA + diphosphate. It participates in cofactor biosynthesis; coenzyme A biosynthesis; CoA from (R)-pantothenate: step 4/5. Its function is as follows. Reversibly transfers an adenylyl group from ATP to 4'-phosphopantetheine, yielding dephospho-CoA (dPCoA) and pyrophosphate. The polypeptide is Phosphopantetheine adenylyltransferase (Xanthomonas axonopodis pv. citri (strain 306)).